We begin with the raw amino-acid sequence, 295 residues long: (R)-3-hydroxydecanoyl-ACP:CoA transacylase (295 aa).

Residues 28-254 (NTIILINGSL…VIRDAGHFLD (227 aa)) enclose the AB hydrolase-1 domain.

It participates in polyester biosynthesis; polyhydroxyalkanoate biosynthesis. Catalyzes the transfer of the acyl moiety from in vitro synthesized 3-hydroxydecanoyl-CoA to acyl carrier protein. In Pseudomonas putida (strain ATCC 47054 / DSM 6125 / CFBP 8728 / NCIMB 11950 / KT2440), this protein is (R)-3-hydroxydecanoyl-ACP:CoA transacylase (phaG).